The chain runs to 177 residues: Nucleoside triphosphate/diphosphate phosphatase (177 aa).

The active-site Proton donor is the R23. Positions 87, 103, 105, 107, 120, and 123 each coordinate Mg(2+).

The protein belongs to the Ntdp family. It depends on Mg(2+) as a cofactor.

It catalyses the reaction a ribonucleoside 5'-triphosphate + H2O = a ribonucleoside 5'-diphosphate + phosphate + H(+). The enzyme catalyses a ribonucleoside 5'-diphosphate + H2O = a ribonucleoside 5'-phosphate + phosphate + H(+). Functionally, has nucleoside phosphatase activity towards nucleoside triphosphates and nucleoside diphosphates. This Streptococcus sanguinis (strain SK36) protein is Nucleoside triphosphate/diphosphate phosphatase.